Consider the following 228-residue polypeptide: uncharacterized protein (228 aa).

This is an uncharacterized protein from Archaeoglobus fulgidus (strain ATCC 49558 / DSM 4304 / JCM 9628 / NBRC 100126 / VC-16).